A 90-amino-acid chain; its full sequence is RNA silencing suppressor (90 aa).

Residues 15–18 (KRRR) form a basic region.

This sequence belongs to the carlaviruses nucleic acid-binding protein family.

Its function is as follows. Suppressor of viral-induced RNA silencing. The potential mechanism of action is based on sequestering siRNAs. This chain is RNA silencing suppressor (ORF5), found in Grapevine virus A (isolate Is 151) (GVA).